Reading from the N-terminus, the 303-residue chain is NAD(+)--arginine ADP-ribosyltransferase Lart1 (303 aa).

Its subcellular location is the secreted. It catalyses the reaction L-arginyl-[protein] + NAD(+) = N(omega)-(ADP-D-ribosyl)-L-arginyl-[protein] + nicotinamide + H(+). ADP-ribosyltransferase that targets a specific class of NAD(+)-dependent glutamate dehydrogenase (GDH) enzymes found in fungi and protists, including many natural hosts of Legionella. Acts by targeting a conserved arginine residue in the NAD(+)-binding pocket of GDH, thereby blocking oxidative deamination of glutamate. Lart1 may target amoeba GDH to prevent a conserved stress response. In vitro, acts on Glud2 from the amoeba Dictyostelium discoideum (DdGluD2) and yeast Gdh2p but does not act on human or Legionella GDH homologs. This chain is NAD(+)--arginine ADP-ribosyltransferase Lart1, found in Legionella pneumophila subsp. pneumophila (strain Philadelphia 1 / ATCC 33152 / DSM 7513).